A 194-amino-acid polypeptide reads, in one-letter code: Ribonuclease HII (194 aa).

An RNase H type-2 domain is found at 1 to 194 (MTVGVDEVGR…RLFPRDDGLR (194 aa)). A divalent metal cation is bound by residues aspartate 6, glutamate 7, and aspartate 102.

The protein belongs to the RNase HII family. The cofactor is Mn(2+). Mg(2+) is required as a cofactor.

The protein resides in the cytoplasm. The enzyme catalyses Endonucleolytic cleavage to 5'-phosphomonoester.. Endonuclease that specifically degrades the RNA of RNA-DNA hybrids. The polypeptide is Ribonuclease HII (Synechococcus sp. (strain WH7803)).